The following is a 701-amino-acid chain: Translation factor GUF1, mitochondrial (701 aa).

Residues 1–29 (MSCCKGLTPQCVRVRLPRRPALSHPARLY) constitute a mitochondrion transit peptide. The segment covering 23–50 (SHPARLYSSSSSSNSHSSPSRPRLLSRP) has biased composition (low complexity). Positions 23-85 (SHPARLYSSS…RSSHHSSAPM (63 aa)) are disordered. The tr-type G domain maps to 98-283 (ERYRNFCVIA…AVIEQIPHPT (186 aa)). GTP is bound by residues 107–114 (AHVDHGKS), 172–176 (DTPGH), and 226–229 (NKID).

The protein belongs to the TRAFAC class translation factor GTPase superfamily. Classic translation factor GTPase family. LepA subfamily.

It localises to the mitochondrion inner membrane. The enzyme catalyses GTP + H2O = GDP + phosphate + H(+). Functionally, promotes mitochondrial protein synthesis. May act as a fidelity factor of the translation reaction, by catalyzing a one-codon backward translocation of tRNAs on improperly translocated ribosomes. Binds to mitochondrial ribosomes in a GTP-dependent manner. The protein is Translation factor GUF1, mitochondrial of Pyricularia oryzae (strain 70-15 / ATCC MYA-4617 / FGSC 8958) (Rice blast fungus).